Here is a 612-residue protein sequence, read N- to C-terminus: Arginine--tRNA ligase (612 aa).

A 'HIGH' region motif is present at residues Pro152 to His162.

It belongs to the class-I aminoacyl-tRNA synthetase family. As to quaternary structure, monomer.

It is found in the cytoplasm. It carries out the reaction tRNA(Arg) + L-arginine + ATP = L-arginyl-tRNA(Arg) + AMP + diphosphate. This is Arginine--tRNA ligase from Prochlorococcus marinus (strain MIT 9313).